Here is a 976-residue protein sequence, read N- to C-terminus: Ephrin type-A receptor 1 (976 aa).

A signal peptide spans 1-25 (MERRWPLGLGLVLLLCAPLPPGARA). Topologically, residues 26 to 547 (KEVTLMDTSK…PVSRGLTGGE (522 aa)) are extracellular. In terms of domain architecture, Eph LBD spans 27 to 209 (EVTLMDTSKA…FYQRCPETLN (183 aa)). 2 consecutive Fibronectin type-III domains span residues 332–445 (PPSA…MGHA) and 447–538 (SLSG…TSPP). Asparagine 414 is a glycosylation site (N-linked (GlcNAc...) asparagine). A helical transmembrane segment spans residues 548 to 568 (IVAVIFGLLLGAALLLGILVF). The Cytoplasmic portion of the chain corresponds to 569-976 (RSRRAQRQRQ…ILCSIQGFKD (408 aa)). Residues tyrosine 599 and tyrosine 605 each carry the phosphotyrosine; by autocatalysis modification. The Protein kinase domain occupies 624-884 (LMVDTVIGEG…KLQAHLEQLL (261 aa)). Residues 630–638 (IGEGEFGEV) and lysine 656 each bind ATP. The Proton acceptor role is filled by aspartate 749. A Phosphotyrosine; by autocatalysis modification is found at tyrosine 781. Phosphoserine occurs at positions 906 and 910. Positions 913 to 976 (IPYRTVSEWL…ILCSIQGFKD (64 aa)) constitute an SAM domain. At tyrosine 930 the chain carries Phosphotyrosine; by autocatalysis. Positions 974 to 976 (FKD) match the PDZ-binding motif.

It belongs to the protein kinase superfamily. Tyr protein kinase family. Ephrin receptor subfamily. As to quaternary structure, homodimer. Forms a signaling complex with LCK; PTK2B/PYK2 and PI3-kinase upon activation by EFNA1; regulates T-lymphocytes migration. Interacts (via SAM domain) with ILK (via ANK repeats); stimulated by EFNA1 but independent of the kinase activity of EPHA1. Interacts (kinase activity-dependent) with PTK2/FAK1. In terms of processing, phosphorylated. Autophosphorylation is stimulated by its ligand EFNA1. Ubiquitinated. As to expression, overexpressed in several carcinomas.

The protein resides in the cell membrane. The enzyme catalyses L-tyrosyl-[protein] + ATP = O-phospho-L-tyrosyl-[protein] + ADP + H(+). Functionally, receptor tyrosine kinase which binds promiscuously membrane-bound ephrin-A family ligands residing on adjacent cells, leading to contact-dependent bidirectional signaling into neighboring cells. The signaling pathway downstream of the receptor is referred to as forward signaling while the signaling pathway downstream of the ephrin ligand is referred to as reverse signaling. Binds with a low affinity EFNA3 and EFNA4 and with a high affinity to EFNA1 which most probably constitutes its cognate/functional ligand. Upon activation by EFNA1 induces cell attachment to the extracellular matrix inhibiting cell spreading and motility through regulation of ILK and downstream RHOA and RAC. Also plays a role in angiogenesis and regulates cell proliferation. May play a role in apoptosis. The polypeptide is Ephrin type-A receptor 1 (EPHA1) (Homo sapiens (Human)).